We begin with the raw amino-acid sequence, 507 residues long: Phosphoprotein (507 aa).

The interaction with N0 stretch occupies residues 1–48; that stretch reads MAEEQARHVKNGLECIRALKAEPIGSLAVEEAMAAWSEISDNPGQDRA. 4 disordered regions span residues 40–92, 133–168, 201–228, and 252–273; these read SDNP…DAET, SGLDGDSTLSGGDDESENSDVDIGEPDTEGYAITDR, NNFPKLGKTLNVPPPPNPSRASTSETPI, and TQCARKSPSEPSGPGAPAGNVP. Ser86 carries the post-translational modification Phosphoserine. Residues 133-143 show a composition bias toward low complexity; the sequence is SGLDGDSTLSG. Positions 144-160 are enriched in acidic residues; sequence GDDESENSDVDIGEPDT. A Phosphoserine modification is found at Ser151. Residues 260-270 are compositionally biased toward low complexity; the sequence is SEPSGPGAPAG. Positions 304-376 are multimerization; sequence GDYYDDELFS…LSSIMIAIPG (73 aa). Interaction with the L polymerase stretches follow at residues 361-377 and 396-410; these read STLEGHLSSIMIAIPGL and PIIGRDSGRALAEVL. Residues 457–507 form a x domain (XD) region; it reads GPASRSVIRSIIKSSRLEEDRKRYLMTLLDDIKGANDLAKFHQMLMKIIMK. The tract at residues 459–507 is interaction with the nucleocapsid (N-RNA); that stretch reads ASRSVIRSIIKSSRLEEDRKRYLMTLLDDIKGANDLAKFHQMLMKIIMK.

The protein belongs to the morbillivirus P protein family. As to quaternary structure, homotetramer. Interacts (via multimerization domain and XD domain) with polymerase L; this interaction forms the polymerase L-P complex. Interacts (via N-terminus) with N0 (via Ncore); this interaction allows P to chaperon N0 to avoid N polymerization and non-specific RNA binding before encapsidation. Interacts (via C-terminus) with N-RNA template (via Ntail); this interaction maintains the P/L complex anchored to the nucleocapsid template during the sequential transcription. Interacts (via C-terminus) with protein C this interaction allows C to associate with the ribonucleocapsid. In terms of processing, phosphorylation on serines by host CK2 is necessary for the formation of viral factories.

Functionally, essential cofactor of the RNA polymerase L that plays a central role in the transcription and replication by forming the polymerase complex with RNA polymerase L and recruiting L to the genomic N-RNA template for RNA synthesis. Also plays a central role in the encapsidation of nascent RNA chains by forming the encapsidation complex with the nucleocapsid protein N (N-P complex). Acts as a chaperone for newly synthesized free N protein, so-called N0, allowing encapsidation of nascent RNA chains during replication. The nucleoprotein protein N prevents excessive phosphorylation of P, which leads to down-regulation of viral transcription/ replication. Participates, together with N, in the formation of viral factories (viroplasms), which are large inclusions in the host cytoplasm where replication takes place. The chain is Phosphoprotein (P/V) from Homo sapiens (Human).